The chain runs to 294 residues: MTASIIDGKVIAADLRARVAFEVARVKRDHGLTPGLAVVLVGSDPASEVYVRSKHKQTQAAGMASFEHVLPADVAQPDLLALVARLNADPAVHGILVQLPLPKGLDTETIVAAIDPAKDVDGLHPHNAGRLAGGLPALSPCTPLGCIILTKSVHSSLEGMDAIVIGRSNLVGRPLVQLLLNENATVTIAHSRSRNLPELCRRADLVYAAVGKAEMVRGDWLKPGATVIDVGITRRPAADGKTRLIGDVAFDEAMEVAGAVTPVPGGVGQMTVACLLVNTLRAACAIKGLPAPGV.

NADP(+) contacts are provided by residues 166-168 (GRS), serine 191, and isoleucine 232.

This sequence belongs to the tetrahydrofolate dehydrogenase/cyclohydrolase family. In terms of assembly, homodimer.

The catalysed reaction is (6R)-5,10-methylene-5,6,7,8-tetrahydrofolate + NADP(+) = (6R)-5,10-methenyltetrahydrofolate + NADPH. It carries out the reaction (6R)-5,10-methenyltetrahydrofolate + H2O = (6R)-10-formyltetrahydrofolate + H(+). Its pathway is one-carbon metabolism; tetrahydrofolate interconversion. Functionally, catalyzes the oxidation of 5,10-methylenetetrahydrofolate to 5,10-methenyltetrahydrofolate and then the hydrolysis of 5,10-methenyltetrahydrofolate to 10-formyltetrahydrofolate. The chain is Bifunctional protein FolD from Nitrobacter hamburgensis (strain DSM 10229 / NCIMB 13809 / X14).